Here is an 828-residue protein sequence, read N- to C-terminus: Glycerol-3-phosphate acyltransferase (828 aa).

The short motif at 310–315 (HRSHID) is the HXXXXD motif element.

It belongs to the GPAT/DAPAT family.

Its subcellular location is the cell inner membrane. It carries out the reaction sn-glycerol 3-phosphate + an acyl-CoA = a 1-acyl-sn-glycero-3-phosphate + CoA. It functions in the pathway phospholipid metabolism; CDP-diacylglycerol biosynthesis; CDP-diacylglycerol from sn-glycerol 3-phosphate: step 1/3. This is Glycerol-3-phosphate acyltransferase from Pseudomonas putida (strain ATCC 47054 / DSM 6125 / CFBP 8728 / NCIMB 11950 / KT2440).